The chain runs to 450 residues: Growth/differentiation factor 7 (450 aa).

A signal peptide spans 1–19 (MDLSAAAALCLWLLSACRP). The propeptide occupies 20 to 321 (RDGLEAAAVL…AVIGGRRRRR (302 aa)). Residue asparagine 83 is glycosylated (N-linked (GlcNAc...) asparagine). A disordered region spans residues 296 to 349 (ASEPLPDPGTGTASPRAVIGGRRRRRTALAGTRTAQGSGGGAGRGHGRRGRSRC). Positions 340-349 (GHGRRGRSRC) are enriched in basic residues. 3 cysteine pairs are disulfide-bonded: cysteine 349–cysteine 415, cysteine 378–cysteine 447, and cysteine 382–cysteine 449.

The protein belongs to the TGF-beta family. As to quaternary structure, homodimer; disulfide-linked.

The protein localises to the secreted. In terms of biological role, may play an active role in the motor area of the primate neocortex. This is Growth/differentiation factor 7 (GDF7) from Homo sapiens (Human).